The chain runs to 313 residues: Glutathione S-transferase omega-like 2 (313 aa).

Catalysis depends on C49, which acts as the Nucleophile. In terms of domain architecture, GST C-terminal spans 161–289 (PSSLRTKIDE…TDFKHIKCHY (129 aa)).

This sequence belongs to the GST superfamily. Omega family.

It localises to the cytoplasm. The protein resides in the nucleus. Its subcellular location is the golgi apparatus. It catalyses the reaction RX + glutathione = an S-substituted glutathione + a halide anion + H(+). The catalysed reaction is L-dehydroascorbate + 2 glutathione = glutathione disulfide + L-ascorbate. Functionally, active as '1-Cys' thiol transferase against beta-hydroxyethyl disulfide (HED), as dehydroascorbate reductase and as dimethylarsinic acid reductase, while not active against the standard GST substrate 1-chloro-2,4-dinitrobenzene (CDNB). May be involved in cell wall organization and biogenesis. The protein is Glutathione S-transferase omega-like 2 (gto2) of Schizosaccharomyces pombe (strain 972 / ATCC 24843) (Fission yeast).